The primary structure comprises 309 residues: Taste receptor type 2 member 46 (309 aa).

M1 is a topological domain (extracellular). The chain crosses the membrane as a helical span at residues 2–22 (ITFLPIIFSILIVVTFVIGNF). The Cytoplasmic portion of the chain corresponds to 23 to 46 (ANGFIALANSIEWFKRQKISFADQ). Residues 47–67 (ILTALAVSRVGLLWVLLLNWY) form a helical membrane-spanning segment. Topologically, residues 68 to 86 (ATELNPAFYSIEVRITAYN) are extracellular. Residues 87–107 (VWAVISHFSNWLATSLSIFYL) form a helical membrane-spanning segment. The Cytoplasmic portion of the chain corresponds to 108 to 126 (LKIANFSNLIFLRLKRRVK). The chain crosses the membrane as a helical span at residues 127-147 (SVVLVILLGPLLFLVCHLFVI). The Extracellular segment spans residues 148–178 (NMNQIIWTKEYEGNMTWKIKLRSAMYLSDTT). A glycan (N-linked (GlcNAc...) asparagine) is linked at N161. The chain crosses the membrane as a helical span at residues 179-199 (VTILANLVPFTLTLISFLLLI). Topologically, residues 200–229 (CSLCKHLKKMQLHGKGSQDPSMKVHIKALQ) are cytoplasmic. Residues 230 to 250 (TVTSFLLLCAIYFLSVIMSVW) traverse the membrane as a helical segment. At 251-259 (SFESLENKP) the chain is on the extracellular side. Residues 260 to 280 (VFMFCEAITFSYPSTHPFILI) traverse the membrane as a helical segment. The Cytoplasmic portion of the chain corresponds to 281-309 (WGNKKLKQTFLSVLWHVRYWVKGEKPSSS).

The protein belongs to the G-protein coupled receptor T2R family.

Its subcellular location is the membrane. It localises to the cell projection. The protein localises to the cilium membrane. Functionally, receptor that may play a role in the perception of bitterness and is gustducin-linked. May play a role in sensing the chemical composition of the gastrointestinal content. The activity of this receptor may stimulate alpha gustducin, mediate PLC-beta-2 activation and lead to the gating of TRPM5. In airway epithelial cells, binding of bitter compounds increases the intracellular calcium ion concentration and stimulates ciliary beat frequency. The chain is Taste receptor type 2 member 46 (TAS2R46) from Gorilla gorilla gorilla (Western lowland gorilla).